The primary structure comprises 299 residues: Ig alpha chain C region (299 aa).

Ig-like domains lie at 71–167 and 174–276; these read PSLS…ATIS and PQVH…KTID.

Functionally, ig alpha is the major immunoglobulin class in body secretions. It may serve both to defend against local infection and to prevent access of foreign antigens to the general immunologic system. This Oryctolagus cuniculus (Rabbit) protein is Ig alpha chain C region.